The sequence spans 315 residues: NAD(P)H-dependent anabolic L-arginine dehydrogenase DauB (315 aa).

The protein belongs to the ornithine cyclodeaminase/mu-crystallin family.

It catalyses the reaction L-arginine + NAD(+) + H2O = 5-guanidino-2-oxopentanoate + NH4(+) + NADH + H(+). The enzyme catalyses L-arginine + NADP(+) + H2O = 5-guanidino-2-oxopentanoate + NH4(+) + NADPH + H(+). Its function is as follows. Involved in the anabolism of D-lysine and D-arginine. Under aerobic conditions, the arginine succinyltransferase (AST) and arginine transaminase (ATA) pathways are 2 major routes for L-arginine utilization as the sole source of carbon and nitrogen. The D-to-L racemization of arginine by DauA and DauB is necessary, before to be channeled into the AST and/or ATA pathways. DauB catalyzes the synthesis of L-arginine from 2-ketoarginine (2-KA) and ammonium. This is NAD(P)H-dependent anabolic L-arginine dehydrogenase DauB from Pseudomonas aeruginosa (strain ATCC 15692 / DSM 22644 / CIP 104116 / JCM 14847 / LMG 12228 / 1C / PRS 101 / PAO1).